Consider the following 512-residue polypeptide: MQLNPSEISDLIKSRIQNLQLAATSRNEGTVVSVTDGITRIHGLTDVMQGEMLEFPGNTFGLALNLERDSVGAVVLGEYEHITEGDTVKATGRILEVPVGPELIGRVVNALGQPIDGKGPINAKLTDKIEKVAPGVIARQSVSQPVQTGLKSVDSMVPIGRGQRELIIGDRQTGKTAVAVDAIINQKGQNMFCVYVAIGQKASTIANVVRKLEENGAMEYTIVVAATASESAAMQYLSAYAGCTMGEYFRDRGQDALIVYDDLTKQAWAYRQVSLLLRRPPGREAYPGDVFYLHSRLLERAARVNADYVEKFTNGEVKGKTGSLTALPVIETQAGDVSAFVPTNVISITDGQIFLETDLFNAGIRPAINAGISVSRVGGAAQTKVVKKLSGGIRTDLAQYRELAAFAQFASDLDDATRKQLERGRRVTELMKQPQYAPLSVAEMAITLYAVNNGYFDDVEVARVLAFESGLQQFVKAKAPELVAKITDTKELDADGEKTLVAAIAEFKKSWA.

Residue 169–176 (GDRQTGKT) participates in ATP binding.

Belongs to the ATPase alpha/beta chains family. In terms of assembly, F-type ATPases have 2 components, CF(1) - the catalytic core - and CF(0) - the membrane proton channel. CF(1) has five subunits: alpha(3), beta(3), gamma(1), delta(1), epsilon(1). CF(0) has three main subunits: a(1), b(2) and c(9-12). The alpha and beta chains form an alternating ring which encloses part of the gamma chain. CF(1) is attached to CF(0) by a central stalk formed by the gamma and epsilon chains, while a peripheral stalk is formed by the delta and b chains.

The protein resides in the cell inner membrane. The catalysed reaction is ATP + H2O + 4 H(+)(in) = ADP + phosphate + 5 H(+)(out). Functionally, produces ATP from ADP in the presence of a proton gradient across the membrane. The alpha chain is a regulatory subunit. The chain is ATP synthase subunit alpha from Azoarcus sp. (strain BH72).